Reading from the N-terminus, the 647-residue chain is DNA ligase (647 aa).

NAD(+) is bound by residues 30-34 (DEEYD), 79-80 (SM), and glutamate 105. Lysine 107 serves as the catalytic N6-AMP-lysine intermediate. Arginine 128, glutamate 162, and lysine 301 together coordinate NAD(+). Residues cysteine 395, cysteine 398, cysteine 411, and cysteine 416 each contribute to the Zn(2+) site. Residues 570–647 (KSDGVIFGKT…ESAFNELVKE (78 aa)) form the BRCT domain.

Belongs to the NAD-dependent DNA ligase family. LigA subfamily. The cofactor is Mg(2+). It depends on Mn(2+) as a cofactor.

The catalysed reaction is NAD(+) + (deoxyribonucleotide)n-3'-hydroxyl + 5'-phospho-(deoxyribonucleotide)m = (deoxyribonucleotide)n+m + AMP + beta-nicotinamide D-nucleotide.. In terms of biological role, DNA ligase that catalyzes the formation of phosphodiester linkages between 5'-phosphoryl and 3'-hydroxyl groups in double-stranded DNA using NAD as a coenzyme and as the energy source for the reaction. It is essential for DNA replication and repair of damaged DNA. The polypeptide is DNA ligase (Campylobacter jejuni subsp. jejuni serotype O:2 (strain ATCC 700819 / NCTC 11168)).